The sequence spans 168 residues: ATP synthase subunit b, sodium ion specific (168 aa).

The chain crosses the membrane as a helical span at residues 9–29 (VSIDINMFWQIINFLILMFFF).

It belongs to the ATPase B chain family. F-type ATPases have 2 components, F(1) - the catalytic core - and F(0) - the membrane proton channel. F(1) has five subunits: alpha(3), beta(3), gamma(1), delta(1), epsilon(1). F(0) has three main subunits: a(1), b(2) and c(10-14). The alpha and beta chains form an alternating ring which encloses part of the gamma chain. F(1) is attached to F(0) by a central stalk formed by the gamma and epsilon chains, while a peripheral stalk is formed by the delta and b chains.

Its subcellular location is the cell inner membrane. Its function is as follows. F(1)F(0) ATP synthase produces ATP from ADP in the presence of a proton or sodium gradient. F-type ATPases consist of two structural domains, F(1) containing the extramembraneous catalytic core and F(0) containing the membrane proton channel, linked together by a central stalk and a peripheral stalk. During catalysis, ATP synthesis in the catalytic domain of F(1) is coupled via a rotary mechanism of the central stalk subunits to proton translocation. Component of the F(0) channel, it forms part of the peripheral stalk, linking F(1) to F(0). The sequence is that of ATP synthase subunit b, sodium ion specific (atpF) from Propionigenium modestum.